The primary structure comprises 37 residues: Large ribosomal subunit protein bL36 (37 aa).

This sequence belongs to the bacterial ribosomal protein bL36 family.

The chain is Large ribosomal subunit protein bL36 from Staphylococcus epidermidis (strain ATCC 35984 / DSM 28319 / BCRC 17069 / CCUG 31568 / BM 3577 / RP62A).